We begin with the raw amino-acid sequence, 275 residues long: Large ribosomal subunit protein uL2 (275 aa).

The segment at 221–275 is disordered; that stretch reads VRGVAMNPVDHPMGGGEGKSSGGRHPCSPWGQQSKGVRTRNNKRTDQFIVKRRSK.

It belongs to the universal ribosomal protein uL2 family. As to quaternary structure, part of the 50S ribosomal subunit. Forms a bridge to the 30S subunit in the 70S ribosome.

One of the primary rRNA binding proteins. Required for association of the 30S and 50S subunits to form the 70S ribosome, for tRNA binding and peptide bond formation. It has been suggested to have peptidyltransferase activity; this is somewhat controversial. Makes several contacts with the 16S rRNA in the 70S ribosome. This Desulfosudis oleivorans (strain DSM 6200 / JCM 39069 / Hxd3) (Desulfococcus oleovorans) protein is Large ribosomal subunit protein uL2.